Reading from the N-terminus, the 389-residue chain is Pyruvate synthase subunit PorA (389 aa).

As to quaternary structure, heterotetramer of one alpha, one beta, one delta and one gamma chain.

It carries out the reaction 2 oxidized [2Fe-2S]-[ferredoxin] + pyruvate + CoA = 2 reduced [2Fe-2S]-[ferredoxin] + acetyl-CoA + CO2 + H(+). The protein is Pyruvate synthase subunit PorA (porA) of Methanocaldococcus jannaschii (strain ATCC 43067 / DSM 2661 / JAL-1 / JCM 10045 / NBRC 100440) (Methanococcus jannaschii).